The following is a 454-amino-acid chain: DNA-binding protein BIN4 (454 aa).

Disordered stretches follow at residues 24–53 (LLSL…DDGD), 103–249 (AGKE…DKDT), and 380–454 (TFES…KAKK). Residues 112–123 (DCEKLSSKHKDA) are compositionally biased toward basic and acidic residues. A compositionally biased stretch (polar residues) spans 132–150 (LVSSDSEPSSPIKQEVTVS). Positions 229-249 (TPKEENCAQEILKTEDKDKDT) are enriched in basic and acidic residues. The span at 438–454 (PAKKARNSAPKKPKAKK) shows a compositional bias: basic residues.

In terms of assembly, interacts with TOP6A, RHL1 and itself, but not with TOP6B. Expressed in expanding cotyledons, vascular cells, elongating root cells, developing leaf trichomes, root and apical meristems and lateral root primordia.

Its subcellular location is the nucleus. Its function is as follows. Component of the DNA topoisomerase VI complex. Binds to DNA. Required for chromatin organization and progression of endoreduplication cycles. The loss of BIN4 activates the ATM- and ATR-dependent DNA damage responses in postmitotic cells and induces the ectopic expression of the mitotic G2/M-specific cyclin B1;1 gene in non-dividing cells. This is DNA-binding protein BIN4 (BIN4) from Arabidopsis thaliana (Mouse-ear cress).